The following is a 138-amino-acid chain: MIYIDASNHIYGRLSSYVAKKLLNGESITIVNASKVVITGRKEFIIDKFNNLRNTGSIRKGPYYPKTADRILKRSIGDMLPKKKTHGMEALKRCMVYANVPKSLENKNFERIESAMNKKVTGFITLGEISKILGETYE.

Belongs to the universal ribosomal protein uL13 family. As to quaternary structure, part of the 50S ribosomal subunit.

In terms of biological role, this protein is one of the early assembly proteins of the 50S ribosomal subunit, although it is not seen to bind rRNA by itself. It is important during the early stages of 50S assembly. This chain is Large ribosomal subunit protein uL13, found in Picrophilus torridus (strain ATCC 700027 / DSM 9790 / JCM 10055 / NBRC 100828 / KAW 2/3).